A 432-amino-acid chain; its full sequence is Adenylosuccinate synthetase (432 aa).

Residues 13-19 (GDEGKGK) and 41-43 (GHT) contribute to the GTP site. Residue Asp-14 is the Proton acceptor of the active site. Asp-14 and Gly-41 together coordinate Mg(2+). IMP is bound by residues 14 to 17 (DEGK), 39 to 42 (NAGH), Thr-130, Arg-144, Gln-225, Thr-240, and Arg-304. The Proton donor role is filled by His-42. Residue 300-306 (AVTGRPR) coordinates substrate. Residues Arg-306, 332-334 (KLD), and 415-417 (STG) contribute to the GTP site.

This sequence belongs to the adenylosuccinate synthetase family. As to quaternary structure, homodimer. The cofactor is Mg(2+).

It localises to the cytoplasm. It catalyses the reaction IMP + L-aspartate + GTP = N(6)-(1,2-dicarboxyethyl)-AMP + GDP + phosphate + 2 H(+). It functions in the pathway purine metabolism; AMP biosynthesis via de novo pathway; AMP from IMP: step 1/2. Its function is as follows. Plays an important role in the de novo pathway of purine nucleotide biosynthesis. Catalyzes the first committed step in the biosynthesis of AMP from IMP. In Actinobacillus pleuropneumoniae serotype 3 (strain JL03), this protein is Adenylosuccinate synthetase.